The sequence spans 239 residues: Phosphoglycolate phosphatase (239 aa).

D14 serves as the catalytic Nucleophile. Mg(2+)-binding residues include D14 and D16. K160 is a substrate binding site. D183 and D187 together coordinate Mg(2+).

Belongs to the archaeal SPP-like hydrolase family. Mg(2+) serves as cofactor.

It catalyses the reaction 2-phosphoglycolate + H2O = glycolate + phosphate. Catalyzes the dephosphorylation of 2-phosphoglycolate. This is Phosphoglycolate phosphatase from Aeropyrum pernix (strain ATCC 700893 / DSM 11879 / JCM 9820 / NBRC 100138 / K1).